The following is a 598-amino-acid chain: Aspartate--tRNA(Asp/Asn) ligase (598 aa).

Residue Glu-173 participates in L-aspartate binding. The interval 197 to 200 is aspartate; the sequence is QLFK. L-aspartate is bound at residue Arg-219. ATP-binding positions include 219–221 and Gln-228; that span reads RDE. His-448 is a binding site for L-aspartate. Glu-482 serves as a coordination point for ATP. Position 489 (Arg-489) interacts with L-aspartate. 534–537 is an ATP binding site; sequence GWDR. The disordered stretch occupies residues 560–598; it reads GYDPLTAAPAPITAQQRKEAGVDAKPETKKAAAGEPAGA. Residues 575-591 are compositionally biased toward basic and acidic residues; that stretch reads QRKEAGVDAKPETKKAA.

This sequence belongs to the class-II aminoacyl-tRNA synthetase family. Type 1 subfamily. Homodimer.

Its subcellular location is the cytoplasm. The catalysed reaction is tRNA(Asx) + L-aspartate + ATP = L-aspartyl-tRNA(Asx) + AMP + diphosphate. In terms of biological role, aspartyl-tRNA synthetase with relaxed tRNA specificity since it is able to aspartylate not only its cognate tRNA(Asp) but also tRNA(Asn). Reaction proceeds in two steps: L-aspartate is first activated by ATP to form Asp-AMP and then transferred to the acceptor end of tRNA(Asp/Asn). The polypeptide is Aspartate--tRNA(Asp/Asn) ligase (Kineococcus radiotolerans (strain ATCC BAA-149 / DSM 14245 / SRS30216)).